Reading from the N-terminus, the 826-residue chain is Capsid-associated protein Vp91 (826 aa).

The first 18 residues, 1–18, serve as a signal peptide directing secretion; it reads MSDVVLLVLAIIFIIIFV. The segment at 147 to 196 adopts a C2HC BV-type zinc-finger fold; the sequence is CVPINPCDTRAPGLYAMDEHLLDALVHSQHLDKDYTINAHLQHPTLYLRC. 2 disulfide bridges follow: cysteine 207–cysteine 220 and cysteine 260–cysteine 273. The N-linked (GlcNAc...) asparagine; by host glycan is linked to asparagine 210. A Chitin-binding type-2 domain is found at 223-281; that stretch reads NELCQGRPDGYVLDYFPETLLVNEFVECYESKHVVKQCPEQHVFDRQLMTCVQAHPCAF. N-linked (GlcNAc...) asparagine; by host glycans are attached at residues asparagine 333, asparagine 371, asparagine 413, asparagine 510, asparagine 520, and asparagine 609. The disordered stretch occupies residues 651-679; sequence GDGDHWGPDLPPPVQPDSEPDESEPEPEV. Acidic residues predominate over residues 668–677; sequence SEPDESEPEP. A glycan (N-linked (GlcNAc...) asparagine; by host) is linked at asparagine 722.

It is found in the virion. Its function is as follows. Probable capsid-associated protein. The sequence is that of Capsid-associated protein Vp91 from Epiphyas postvittana nucleopolyhedrovirus (EppoMNPV).